A 363-amino-acid chain; its full sequence is Bonnadiene synthase (363 aa).

5 residues coordinate Mg(2+): D93, D98, N234, S238, and E242.

It belongs to the terpene synthase family. It depends on Mg(2+) as a cofactor.

It catalyses the reaction (2E,6E,10E)-geranylgeranyl diphosphate = bonnadiene + diphosphate. It participates in secondary metabolite biosynthesis; terpenoid biosynthesis. Diterpene synthase that catalyzes the conversion of geranylgeranyl diphosphate (GGPP) to bonnadiene. Cannot use geranyl diphosphate (GPP), farnesyl diphosphate (FPP) and geranylfarnesyl diphosphate (GFPP). This Allokutzneria albata (Kibdelosporangium albatum) protein is Bonnadiene synthase.